A 178-amino-acid polypeptide reads, in one-letter code: ATP synthase subunit delta (178 aa).

Belongs to the ATPase delta chain family. F-type ATPases have 2 components, F(1) - the catalytic core - and F(0) - the membrane proton channel. F(1) has five subunits: alpha(3), beta(3), gamma(1), delta(1), epsilon(1). F(0) has three main subunits: a(1), b(2) and c(10-14). The alpha and beta chains form an alternating ring which encloses part of the gamma chain. F(1) is attached to F(0) by a central stalk formed by the gamma and epsilon chains, while a peripheral stalk is formed by the delta and b chains.

The protein resides in the cell inner membrane. F(1)F(0) ATP synthase produces ATP from ADP in the presence of a proton or sodium gradient. F-type ATPases consist of two structural domains, F(1) containing the extramembraneous catalytic core and F(0) containing the membrane proton channel, linked together by a central stalk and a peripheral stalk. During catalysis, ATP synthesis in the catalytic domain of F(1) is coupled via a rotary mechanism of the central stalk subunits to proton translocation. In terms of biological role, this protein is part of the stalk that links CF(0) to CF(1). It either transmits conformational changes from CF(0) to CF(1) or is implicated in proton conduction. The protein is ATP synthase subunit delta of Methylobacillus flagellatus (strain ATCC 51484 / DSM 6875 / VKM B-1610 / KT).